A 230-amino-acid polypeptide reads, in one-letter code: uncharacterized protein (230 aa).

The N-terminal stretch at 1 to 18 is a signal peptide; the sequence is MRQYTSKSILFMTAIALS.

This is an uncharacterized protein from Pasteurella multocida (strain Pm70).